The chain runs to 361 residues: MATAASNPYSILSSSSLVHADSAGMQQGSPFRNPQKLLQSDYLQGVPSNGHPLGHHWVTSLSDGGPWSSTLATSPLDQPDVKPGREDLQLGAIIHHRSPHVAHHSPHTNHPNAWGASPAPNSSITNSGQPLNVYSQPGFTVSGMLEHGGLTPPPAAASTQSLHPVLREPPDHGELGSHHCQDHSDEETPTSDELEQFAKQFKQRRIKLGFTQADVGLALGTLYGNVFSQTTICRFEALQLSFKNMCKLKPLLNKWLEEADSSTGSPTSIDKIAAQGRKRKKRTSIEVSVKGVLETHFLKCPKPAAQEISSLADSLQLEKEVVRVWFCNRRQKEKRMTPPGDQQPHEVYSHTVKTDASCHDL.

Disordered stretches follow at residues 99 to 131 (PHVA…GQPL) and 144 to 192 (MLEH…PTSD). Residues 119–131 (APNSSITNSGQPL) are compositionally biased toward polar residues. Residues 165–183 (VLREPPDHGELGSHHCQDH) show a composition bias toward basic and acidic residues. One can recognise a POU-specific domain in the interval 186-260 (EETPTSDELE…LLNKWLEEAD (75 aa)). S265 bears the Phosphoserine mark. A DNA-binding region (homeobox) is located at residues 278–337 (KRKKRTSIEVSVKGVLETHFLKCPKPAAQEISSLADSLQLEKEVVRVWFCNRRQKEKRMT). The disordered stretch occupies residues 334-361 (KRMTPPGDQQPHEVYSHTVKTDASCHDL). Basic and acidic residues predominate over residues 343–361 (QPHEVYSHTVKTDASCHDL).

Belongs to the POU transcription factor family. Class-3 subfamily.

It localises to the nucleus. In terms of biological role, probable transcription factor which exert its primary action widely during early neural development and in a very limited set of neurons in the mature brain. This Mesocricetus auratus (Golden hamster) protein is POU domain, class 3, transcription factor 4 (Pou3f4).